Consider the following 496-residue polypeptide: N-acetylmuramoyl-L-alanine amidase LytC (496 aa).

The N-terminal stretch at 1–24 (MRSYIKVLTMCFLGLILFVPTALA) is a signal peptide. 3 tandem repeats follow at residues 30–128 (RVGG…ISIK), 129–222 (RIAG…PSPT), and 223–318 (RISG…NPVV). The tract at residues 30-318 (RVGGSNRYGT…VANQLKNPVV (289 aa)) is 3 X tandem repeats. In terms of domain architecture, MurNAc-LAA spans 322 to 490 (IFIDPGHGDQ…DKAAQAIHDG (169 aa)).

Belongs to the N-acetylmuramoyl-L-alanine amidase 3 family.

The protein localises to the secreted. Its subcellular location is the cell wall. The enzyme catalyses Hydrolyzes the link between N-acetylmuramoyl residues and L-amino acid residues in certain cell-wall glycopeptides.. Its function is as follows. Autolysins are cell wall hydrolases involved in some important biological processes such as cell separation, cell-wall turnover, competence for genetic transformation, formation of the flagella - in particular of its basal body - and sporulation. Has a high affinity for teichoic acid-endowed peptidoglycan. LytC is required for efficient swarming motility but not at the level of cell separation or flagellum biosynthesis. Rather, LytC appears to be important for proper flagellar function. This Bacillus subtilis (strain 168) protein is N-acetylmuramoyl-L-alanine amidase LytC (lytC).